A 304-amino-acid chain; its full sequence is MNPLCSEFTSSSRKAPEAAIGQVLIEALPYIRKFEGKTFVIKYGGSAMKDELLKNSFAQNVTLLRKVGINVVLVHGGGDAITRTAEKLGLVSQFVHGKRVTDNDMITVVQMTLAGKVNQDIVRLLSEHGGKAVGVTGLDADTIKAVPGPNAEKLGLVGDVESINTDYIDLLCRAGLIPVIAPVGYDHNGNIYNINADDAASSIAIALKAEKLIYVSDVEGIQVGERILKTICKAEAADFIEQGIISGGMIPKVLSAFKTLDGGVRKIHLIDGKFTHSLLLEIFTHEGIGTQFIAEQDNDQQENR.

Residues glycine 77 to glycine 78, arginine 99, and asparagine 193 contribute to the substrate site.

Belongs to the acetylglutamate kinase family. ArgB subfamily.

The protein localises to the cytoplasm. The catalysed reaction is N-acetyl-L-glutamate + ATP = N-acetyl-L-glutamyl 5-phosphate + ADP. The protein operates within amino-acid biosynthesis; L-arginine biosynthesis; N(2)-acetyl-L-ornithine from L-glutamate: step 2/4. Functionally, catalyzes the ATP-dependent phosphorylation of N-acetyl-L-glutamate. The sequence is that of Acetylglutamate kinase from Chlorobium limicola (strain DSM 245 / NBRC 103803 / 6330).